We begin with the raw amino-acid sequence, 405 residues long: CRS2-associated factor 1, mitochondrial (405 aa).

The transit peptide at Met1–Arg20 directs the protein to the mitochondrion. The disordered stretch occupies residues Arg32–Gly75. 2 CRM domains span residues Ala157–Lys255 and Asp277–Asp373. The segment at Ser384–Thr405 is disordered.

In terms of assembly, part of large ribonucleo-protein complexes that include group IIB introns.

The protein localises to the mitochondrion. May be involved in the splicing of group IIB introns in mitochondria. The chain is CRS2-associated factor 1, mitochondrial from Arabidopsis thaliana (Mouse-ear cress).